An 810-amino-acid polypeptide reads, in one-letter code: Bifunctional aspartokinase/homoserine dehydrogenase 2 (810 aa).

The segment at 2 to 252 is aspartokinase; sequence SVIAQAGAKG…VKDACLLPLL (251 aa). The tract at residues 253-463 is interface; sequence RLDEASELAR…RAEKRIGLVL (211 aa). Positions 464–810 are homoserine dehydrogenase; sequence FGKGNIGSRW…SDINRLAQLL (347 aa). The NADP(+) site is built by Asn468 and Ile469. NAD(+) contacts are provided by Ile469 and Val498. Position 469 (Ile469) interacts with NADPH. NADP(+)-binding residues include Arg501, Thr549, and Lys573. NAD(+) is bound at residue Thr549. Residues Thr549 and Lys573 each contribute to the NADPH site. Na(+) is bound by residues Val603, Ala605, and Leu607. Positions 658 and 661 each coordinate NADP(+). Positions 661 and 672 each coordinate L-homoserine. Lys676 serves as the catalytic Proton donor. Gly791 serves as a coordination point for NADP(+). NAD(+) is bound at residue Gly791. Gly791 is a binding site for NADPH.

This sequence in the N-terminal section; belongs to the aspartokinase family. It in the C-terminal section; belongs to the homoserine dehydrogenase family. Homotetramer. A metal cation is required as a cofactor.

The enzyme catalyses L-homoserine + NADP(+) = L-aspartate 4-semialdehyde + NADPH + H(+). The catalysed reaction is L-homoserine + NAD(+) = L-aspartate 4-semialdehyde + NADH + H(+). It catalyses the reaction L-aspartate + ATP = 4-phospho-L-aspartate + ADP. It participates in amino-acid biosynthesis; L-lysine biosynthesis via DAP pathway; (S)-tetrahydrodipicolinate from L-aspartate: step 1/4. The protein operates within amino-acid biosynthesis; L-methionine biosynthesis via de novo pathway; L-homoserine from L-aspartate: step 1/3. It functions in the pathway amino-acid biosynthesis; L-methionine biosynthesis via de novo pathway; L-homoserine from L-aspartate: step 3/3. Its pathway is amino-acid biosynthesis; L-threonine biosynthesis; L-threonine from L-aspartate: step 1/5. It participates in amino-acid biosynthesis; L-threonine biosynthesis; L-threonine from L-aspartate: step 3/5. Its function is as follows. Bifunctional aspartate kinase and homoserine dehydrogenase that catalyzes the first and the third steps toward the synthesis of lysine, methionine and threonine from aspartate. The sequence is that of Bifunctional aspartokinase/homoserine dehydrogenase 2 (metL) from Escherichia coli (strain K12).